We begin with the raw amino-acid sequence, 508 residues long: 25-hydroxyvitamin D-1 alpha hydroxylase, mitochondrial (508 aa).

Cys455 is a heme binding site.

The protein belongs to the cytochrome P450 family. Heme is required as a cofactor. In terms of tissue distribution, kidney.

It localises to the mitochondrion membrane. The catalysed reaction is calcidiol + 2 reduced [adrenodoxin] + O2 + 2 H(+) = calcitriol + 2 oxidized [adrenodoxin] + H2O. It carries out the reaction secalciferol + 2 reduced [adrenodoxin] + O2 + 2 H(+) = calcitetrol + 2 oxidized [adrenodoxin] + H2O. It catalyses the reaction 25-hydroxy-24-oxocalciol + 2 reduced [adrenodoxin] + O2 + 2 H(+) = (1S)-1,25-dihydroxy-24-oxocalciol + 2 oxidized [adrenodoxin] + H2O. The enzyme catalyses 25-hydroxyvitamin D2 + 2 reduced [adrenodoxin] + O2 + 2 H(+) = 1alpha,25-dihydroxyvitamin D2 + 2 oxidized [adrenodoxin] + H2O. It participates in hormone biosynthesis; vitamin D biosynthesis. Activated by cardiolipin and dioleoyl phosphatidylethanolamine (DOPE), phospholipids found in the inner mitochondrial membrane. Inhibited by high substrate concentration. In terms of biological role, a cytochrome P450 monooxygenase involved in vitamin D metabolism and in calcium and phosphorus homeostasis. Catalyzes the rate-limiting step in the activation of vitamin D in the kidney, namely the hydroxylation of 25-hydroxyvitamin D3/calcidiol at the C1alpha-position to form the hormonally active form of vitamin D3, 1alpha,25-dihydroxyvitamin D3/calcitriol that acts via the vitamin D receptor (VDR). Has 1alpha-hydroxylase activity on vitamin D intermediates of the CYP24A1-mediated inactivation pathway. Converts 24R,25-dihydroxyvitamin D3/secalciferol to 1-alpha,24,25-trihydroxyvitamin D3, an active ligand of VDR. Also active on 25-hydroxyvitamin D2. Mechanistically, uses molecular oxygen inserting one oxygen atom into a substrate, and reducing the second into a water molecule, with two electrons provided by NADPH via FDXR/adrenodoxin reductase and FDX1/adrenodoxin. The protein is 25-hydroxyvitamin D-1 alpha hydroxylase, mitochondrial (CYP27B1) of Homo sapiens (Human).